A 636-amino-acid chain; its full sequence is 1-deoxy-D-xylulose-5-phosphate synthase (636 aa).

Residues His75 and 116–118 (AHS) each bind thiamine diphosphate. Asp147 contributes to the Mg(2+) binding site. Thiamine diphosphate is bound by residues 148-149 (GA), Asn177, Tyr288, and Glu370. Asn177 is a binding site for Mg(2+).

This sequence belongs to the transketolase family. DXPS subfamily. In terms of assembly, homodimer. The cofactor is Mg(2+). Thiamine diphosphate serves as cofactor.

The enzyme catalyses D-glyceraldehyde 3-phosphate + pyruvate + H(+) = 1-deoxy-D-xylulose 5-phosphate + CO2. It functions in the pathway metabolic intermediate biosynthesis; 1-deoxy-D-xylulose 5-phosphate biosynthesis; 1-deoxy-D-xylulose 5-phosphate from D-glyceraldehyde 3-phosphate and pyruvate: step 1/1. Its function is as follows. Catalyzes the acyloin condensation reaction between C atoms 2 and 3 of pyruvate and glyceraldehyde 3-phosphate to yield 1-deoxy-D-xylulose-5-phosphate (DXP). This chain is 1-deoxy-D-xylulose-5-phosphate synthase, found in Ralstonia nicotianae (strain ATCC BAA-1114 / GMI1000) (Ralstonia solanacearum).